The sequence spans 67 residues: Alpha-conotoxin G1.5 (67 aa).

An N-terminal signal peptide occupies residues 1–21 (MGMRMMFTVFLLVALATTVVS). Residues 22-47 (FTSDRASDRRNAAVKAFDLISSTVKK) constitute a propeptide that is removed on maturation. Disulfide bonds link Cys49-Cys55 and Cys50-Cys63. Gln65 carries the glutamine amide modification.

Belongs to the conotoxin A superfamily. Expressed by the venom duct.

The protein localises to the secreted. Functionally, alpha-conotoxins act on postsynaptic membranes, they bind to the nicotinic acetylcholine receptors (nAChR) and thus inhibit them. Globular isomer (C1-C3; C2-C4) selectively inhibits neuronal (non-muscle) nAChR subtypes particularly human alpha-3-beta-2/CHRNA3-CHRNB2 (IC(50)=35.7 nM) and alpha-9-alpha-10/CHRNA9-CHRNA10 nAChRs (IC(50)=569 nM), while the ribbon isomer (C1-C4; C2-C3) shows weak inhibition on alpha-3-beta-2/CHRNA3-CHRNB2, but not on all other receptors tested. This chain is Alpha-conotoxin G1.5, found in Conus geographus (Geography cone).